Consider the following 778-residue polypeptide: uncharacterized protein (778 aa).

In terms of domain architecture, PE spans 1–92; the sequence is MSFVIAVPEA…GARSYVVAEA (92 aa). 3 disordered regions span residues 125-163, 372-510, and 718-778; these read ADGT…AGLI, TGLA…GDAF, and QGGL…GADG. 3 stretches are compositionally biased toward gly residues: residues 402–429, 436–510, and 718–763; these read NQTG…GGLG, DGTG…GDAF, and QGGL…GSSG.

This sequence belongs to the mycobacterial PE family. PGRS subfamily.

This is an uncharacterized protein from Mycobacterium tuberculosis (strain CDC 1551 / Oshkosh).